A 455-amino-acid chain; its full sequence is tRNA modification GTPase MnmE (455 aa).

(6S)-5-formyl-5,6,7,8-tetrahydrofolate-binding residues include Arg24, Glu81, and Lys121. Residues Gly217–Gly378 enclose the TrmE-type G domain. Asn227 contacts K(+). Residues Asn227–Ser232, Thr246–Thr252, Asp271–Gly274, and Asn336–Asp339 contribute to the GTP site. Ser231 contacts Mg(2+). K(+) contacts are provided by Thr246, Ile248, and Thr251. Thr252 serves as a coordination point for Mg(2+). Lys455 contributes to the (6S)-5-formyl-5,6,7,8-tetrahydrofolate binding site.

Belongs to the TRAFAC class TrmE-Era-EngA-EngB-Septin-like GTPase superfamily. TrmE GTPase family. As to quaternary structure, homodimer. Heterotetramer of two MnmE and two MnmG subunits. It depends on K(+) as a cofactor.

The protein resides in the cytoplasm. In terms of biological role, exhibits a very high intrinsic GTPase hydrolysis rate. Involved in the addition of a carboxymethylaminomethyl (cmnm) group at the wobble position (U34) of certain tRNAs, forming tRNA-cmnm(5)s(2)U34. The sequence is that of tRNA modification GTPase MnmE from Psychromonas ingrahamii (strain DSM 17664 / CCUG 51855 / 37).